Consider the following 484-residue polypeptide: MIKTEEKYAQLRTIIPEMRRVKRIHFVGIGGAGMGGIAEVLVNEGYRLSGSDIAENAVTARLKRLGAAIFIGHSADQVEGADVVVVSTAIDASNPEILAAQERRIPIVRRAEMLAELMRYRHGVAVAGTHGKTTTTSLIASVYGQAERDPTFVIGGLLNSAGTNARLGKSRYLIAEADESDASFLHLQPMVSVVTNIEADHMDTYEGDFEKLKSTFVDFLHNLPFYGVAVACIDDPVVREILPRIGRKVVTYGFSEDADVQALNFEQQGYSSRFTVRREGMADLDLRVNLPGRHNVLNALAAIAVATEDEIEDEAIIRALDEFQGIGRRFQQLGEFTTTAGEVMLVDDYGHHPSEVAATIKAARSGWPDKRLVMIYQPHRYSRTRDLYDDFVEVLAQVDCLLLLDVYSAGEAPVPGADSRALCRSIRQRGQLDPIFVAEPEQLQTILPGVLQGGDLLLTQGAGNIGALSRQLADAGLQFESENQ.

An ATP-binding site is contributed by 128–134; the sequence is GTHGKTT.

It belongs to the MurCDEF family.

Its subcellular location is the cytoplasm. It catalyses the reaction UDP-N-acetyl-alpha-D-muramate + L-alanine + ATP = UDP-N-acetyl-alpha-D-muramoyl-L-alanine + ADP + phosphate + H(+). It functions in the pathway cell wall biogenesis; peptidoglycan biosynthesis. Functionally, cell wall formation. This chain is UDP-N-acetylmuramate--L-alanine ligase, found in Shewanella loihica (strain ATCC BAA-1088 / PV-4).